Consider the following 46-residue polypeptide: KSCCPNTTGRNIYNTCRFAGGSRERCAKLSGCKIISASTCPSDYPK.

3 cysteine pairs are disulfide-bonded: cysteine 3-cysteine 40, cysteine 4-cysteine 32, and cysteine 16-cysteine 26.

In terms of assembly, monomer.

The protein localises to the secreted. Functionally, thionins are small plant proteins which are toxic to animal cells. They seem to exert their toxic effect at the level of the cell membrane. Their precise function is not known. The protein is Viscotoxin-C1 of Viscum album (European mistletoe).